The following is a 594-amino-acid chain: Protein HOTHEAD (594 aa).

An N-terminal signal peptide occupies residues 1-19 (MALKLFLFALLLCLPTSLS). Residue 64–91 (DYIVIGGGTAGCPLAATLSQNFSVLVLE) coordinates FAD. Histidine 529 serves as the catalytic Proton acceptor.

It belongs to the GMC oxidoreductase family. Requires FAD as cofactor. As to expression, expressed in roots, leaves, stems, inflorescences and siliques. Found not only in epidermis but also in all sub-epidermal cell layers.

Probable FAD-dependent enzyme. Involved in regulating post-genital organ fusion. Required to limit cellular interactions between contacting epidermal cells during floral development. The sequence is that of Protein HOTHEAD (HTH) from Arabidopsis thaliana (Mouse-ear cress).